The sequence spans 334 residues: Nucleoid-associated protein YpsIP31758_2721 (334 aa).

This sequence belongs to the YejK family.

The protein localises to the cytoplasm. The protein resides in the nucleoid. The protein is Nucleoid-associated protein YpsIP31758_2721 of Yersinia pseudotuberculosis serotype O:1b (strain IP 31758).